Consider the following 323-residue polypeptide: Arginase-1 (323 aa).

The segment at 1–27 (MSSKPKSLEIIGAPFSKGQPRGGVEKG) is disordered. S7 carries the post-translational modification Phosphoserine. N6-succinyllysine is present on K17. 2 positions are modified to phosphoserine: S62 and S72. N6-succinyllysine is present on K75. Mn(2+) is bound by residues H101, D124, H126, and D128. Residues 126–130 (HTDIN) and 137–139 (SGN) contribute to the substrate site. S163 is subject to Phosphoserine. D183 contributes to the substrate binding site. S217 carries the post-translational modification Phosphoserine. Mn(2+) contacts are provided by D232 and D234. T246 and E277 together coordinate substrate. Residue T281 is modified to Phosphothreonine.

The protein belongs to the arginase family. In terms of assembly, homotrimer. Interacts with CMTM6. It depends on Mn(2+) as a cofactor. As to expression, expressed in macrophages. Expressed in precursor and mature group 2 innate lymphoid cells (ILC2s). Expressed in lung tumor-associated myeloid cells. Expressed in lung tumor-infiltrating dendritic cells.

It localises to the cytoplasm. The protein localises to the cytoplasmic granule. It carries out the reaction L-arginine + H2O = urea + L-ornithine. It functions in the pathway nitrogen metabolism; urea cycle; L-ornithine and urea from L-arginine: step 1/1. Key element of the urea cycle converting L-arginine to urea and L-ornithine, which is further metabolized into metabolites proline and polyamides that drive collagen synthesis and bioenergetic pathways critical for cell proliferation, respectively; the urea cycle takes place primarily in the liver and, to a lesser extent, in the kidneys. Its function is as follows. Functions in L-arginine homeostasis in nonhepatic tissues characterized by the competition between nitric oxide synthase (NOS) and arginase for the available intracellular substrate arginine. Arginine metabolism is a critical regulator of innate and adaptive immune responses. Involved in an antimicrobial effector pathway in polymorphonuclear granulocytes (PMN). Upon PMN cell death is liberated from the phagolysosome and depletes arginine in the microenvironment leading to suppressed T cell and natural killer (NK) cell proliferation and cytokine secretion. In group 2 innate lymphoid cells (ILC2s) promotes acute type 2 inflammation in the lung and is involved in optimal ILC2 proliferation but not survival. Plays a role in the immune response of alternatively activated or M2 macrophages in processes such as wound healing and tissue regeneration, immune defense against multicellular pathogens and parasites, and immune suppression and allergic inflammation; the regulatory outcome seems to be organ specific. In tumor-infiltrating dendritic cells (DCs) and myeloid-derived suppressor cells (MDSCs) plays a role in suppression of T cell-mediated antitumor immunity. The protein is Arginase-1 (Arg1) of Mus musculus (Mouse).